Consider the following 138-residue polypeptide: D-ribose pyranase (138 aa).

The Proton donor role is filled by His-20. Substrate is bound by residues Asp-28, His-105, and 127-129 (YAN).

This sequence belongs to the RbsD / FucU family. RbsD subfamily. Homodecamer.

It is found in the cytoplasm. It carries out the reaction beta-D-ribopyranose = beta-D-ribofuranose. It functions in the pathway carbohydrate metabolism; D-ribose degradation; D-ribose 5-phosphate from beta-D-ribopyranose: step 1/2. Functionally, catalyzes the interconversion of beta-pyran and beta-furan forms of D-ribose. The chain is D-ribose pyranase from Psychromonas ingrahamii (strain DSM 17664 / CCUG 51855 / 37).